Consider the following 100-residue polypeptide: Integration host factor subunit alpha (100 aa).

The tract at residues 53 to 73 is disordered; sequence FDLRDKRQRPGRNPKTGEEIP.

The protein belongs to the bacterial histone-like protein family. In terms of assembly, heterodimer of an alpha and a beta chain.

Its function is as follows. This protein is one of the two subunits of integration host factor, a specific DNA-binding protein that functions in genetic recombination as well as in transcriptional and translational control. This Pseudomonas aeruginosa (strain LESB58) protein is Integration host factor subunit alpha.